Reading from the N-terminus, the 279-residue chain is Bifunctional protein FolD (279 aa).

NADP(+) contacts are provided by residues 164 to 166, S189, and I230; that span reads GRS.

This sequence belongs to the tetrahydrofolate dehydrogenase/cyclohydrolase family. As to quaternary structure, homodimer.

The catalysed reaction is (6R)-5,10-methylene-5,6,7,8-tetrahydrofolate + NADP(+) = (6R)-5,10-methenyltetrahydrofolate + NADPH. It catalyses the reaction (6R)-5,10-methenyltetrahydrofolate + H2O = (6R)-10-formyltetrahydrofolate + H(+). It participates in one-carbon metabolism; tetrahydrofolate interconversion. Catalyzes the oxidation of 5,10-methylenetetrahydrofolate to 5,10-methenyltetrahydrofolate and then the hydrolysis of 5,10-methenyltetrahydrofolate to 10-formyltetrahydrofolate. This Agathobacter rectalis (strain ATCC 33656 / DSM 3377 / JCM 17463 / KCTC 5835 / VPI 0990) (Eubacterium rectale) protein is Bifunctional protein FolD.